Reading from the N-terminus, the 242-residue chain is tRNA uridine(34) hydroxylase (242 aa).

A Rhodanese domain is found at Asp-128 to Tyr-222. Cys-182 acts as the Cysteine persulfide intermediate in catalysis.

This sequence belongs to the TrhO family.

The enzyme catalyses uridine(34) in tRNA + AH2 + O2 = 5-hydroxyuridine(34) in tRNA + A + H2O. Its function is as follows. Catalyzes oxygen-dependent 5-hydroxyuridine (ho5U) modification at position 34 in tRNAs. This chain is tRNA uridine(34) hydroxylase, found in Bordetella avium (strain 197N).